The chain runs to 452 residues: MMITLRKLPLAVAVAAGVMSAQAMAVDFHGYARSGIGWTGSGGEQQCFQATGAQSKYRLGNECETYAELKLGQEVWKEGDKSFYFDTNVAYSVNQQNDWESTDPAFREANVQGKNLIEWLPGSTIWAGKRFYQRHDVHMIDFYYWDISGPGAGIENIDLGFGKLSLAATRSTEAGGSYTFSSQNIYDEVKDTANDVFDVRLAGLQTNPDGVLELGVDYGRANTTDGYKLADGASKDGWMFTAEHTQSMLKGYNKFVVQYATDAMTTQGKGQARGSDGSSSFTEELSDGTKINYANKVINNNGNMWRILDHGAISLGDKWDLMYVGMYQNIDWDNNLGTEWWTVGVRPMYKWTPIMSTLLEVGYDNVKSQQTGDRNNQYKITLAQQWQAGDSIWSRPAIRIFATYAKWDEKWGYIKDGDNISRYAAATNSGISTNSRGDSDEWTFGAQMEIWW.

Residues M1–A25 form the signal peptide.

Belongs to the porin LamB (TC 1.B.3) family. In terms of assembly, homotrimer formed of three 18-stranded antiparallel beta-barrels, containing three independent channels.

Its subcellular location is the cell outer membrane. It carries out the reaction beta-maltose(in) = beta-maltose(out). Functionally, involved in the transport of maltose and maltodextrins. This is Maltoporin from Salmonella enteritidis PT4 (strain P125109).